A 53-amino-acid polypeptide reads, in one-letter code: Rubredoxin 3 (53 aa).

Residues 1–53 (MQKWVCVPCGYEYDPADGDPENGIEPGTAFEDLPEDWVCPVCGVDKSFFEPVS) enclose the Rubredoxin-like domain. C6, C9, C39, and C42 together coordinate Fe cation.

The protein belongs to the rubredoxin family. Monomer. Fe(3+) is required as a cofactor.

Functions as an electron acceptor for pyruvate ferredoxin oxidoreductase (PFOR). In Chlorobaculum tepidum (strain ATCC 49652 / DSM 12025 / NBRC 103806 / TLS) (Chlorobium tepidum), this protein is Rubredoxin 3 (rub3).